The primary structure comprises 483 residues: Isocitrate dehydrogenase [NADP] (483 aa).

Residue Thr-74 participates in NADP(+) binding. D-threo-isocitrate contacts are provided by Ser-83, Asn-85, Arg-89, Arg-99, and Arg-121. Mg(2+) is bound at residue Asp-232. Residues 264-270 (HGSAPDI) and Asn-277 contribute to the NADP(+) site.

It belongs to the isocitrate and isopropylmalate dehydrogenases family. As to quaternary structure, homodimer. Mg(2+) is required as a cofactor. It depends on Mn(2+) as a cofactor.

It catalyses the reaction D-threo-isocitrate + NADP(+) = 2-oxoglutarate + CO2 + NADPH. Catalyzes the oxidative decarboxylation of isocitrate to 2-oxoglutarate and carbon dioxide with the concomitant reduction of NADP(+). In Rickettsia prowazekii (strain Madrid E), this protein is Isocitrate dehydrogenase [NADP] (icd).